The following is a 433-amino-acid chain: MTILVLGINHKTASVALREKVAFSDEKRLLALKQIKQTQLAECAVILSTCNRTEVYLHNKNVGPQNDEVWLDSCVQWFADIHQVDLEELKSCLYSQQNLQASRHLMRVASGLDSLILGEPQILGQVKQAYQMSEEYYSLHSDIGMMSTELSRLFQKTFATAKRVRTETHIGESAVSVAYAACSLARQIFDSLRNLNILLVGAGETIELVSRHLLRHGVNGLAIANRTLSRAEKLVEKLETTQKIDIFSLDRLSEGLKRADIVITSTGSPHVLISRNLIEQAQQMRHYKPMLIVDIAVPRDVEESAGEIESVYHYTVDDLHNIIQHNINQREQASQQAEHIIQQESADFFEWLKVHQFSNLIRNYRESAEIIRQDLLEKALQALQNGENTEQVLQELSHKLTKKLIHQPTQAMQTMVKAGNTEGLQAFSHAVKS.

Substrate is bound by residues 49-52 (TCNR), Ser114, 119-121 (EPQ), and Gln125. Cys50 functions as the Nucleophile in the catalytic mechanism. Residue 201–206 (GAGETI) coordinates NADP(+).

It belongs to the glutamyl-tRNA reductase family. In terms of assembly, homodimer.

It catalyses the reaction (S)-4-amino-5-oxopentanoate + tRNA(Glu) + NADP(+) = L-glutamyl-tRNA(Glu) + NADPH + H(+). Its pathway is porphyrin-containing compound metabolism; protoporphyrin-IX biosynthesis; 5-aminolevulinate from L-glutamyl-tRNA(Glu): step 1/2. Catalyzes the NADPH-dependent reduction of glutamyl-tRNA(Glu) to glutamate 1-semialdehyde (GSA). The sequence is that of Glutamyl-tRNA reductase from Histophilus somni (strain 2336) (Haemophilus somnus).